A 431-amino-acid chain; its full sequence is Tol-Pal system protein TolB (431 aa).

Positions 1-26 are cleaved as a signal peptide; it reads MSLMTKLGFRALVASCLITAGSAANA. Residues 406–431 form a disordered region; that stretch reads DGSAPPQILSVQGGSVREPSWGPFMQ.

It belongs to the TolB family. As to quaternary structure, the Tol-Pal system is composed of five core proteins: the inner membrane proteins TolA, TolQ and TolR, the periplasmic protein TolB and the outer membrane protein Pal. They form a network linking the inner and outer membranes and the peptidoglycan layer.

The protein resides in the periplasm. Part of the Tol-Pal system, which plays a role in outer membrane invagination during cell division and is important for maintaining outer membrane integrity. The chain is Tol-Pal system protein TolB from Burkholderia cenocepacia (strain HI2424).